We begin with the raw amino-acid sequence, 383 residues long: uncharacterized protein (383 aa).

The protein to V.anguillarum virulence protein VirA.

Its function is as follows. Could have an enzymatic function. This is an uncharacterized protein from Sinorhizobium fredii (strain NBRC 101917 / NGR234).